A 1119-amino-acid chain; its full sequence is DNA-directed RNA polymerase subunit beta (1119 aa).

This sequence belongs to the RNA polymerase beta chain family. As to quaternary structure, the RNAP catalytic core consists of 2 alpha, 1 beta, 1 beta' and 1 omega subunit. When a sigma factor is associated with the core the holoenzyme is formed, which can initiate transcription.

The catalysed reaction is RNA(n) + a ribonucleoside 5'-triphosphate = RNA(n+1) + diphosphate. Functionally, DNA-dependent RNA polymerase catalyzes the transcription of DNA into RNA using the four ribonucleoside triphosphates as substrates. The chain is DNA-directed RNA polymerase subunit beta from Thermus aquaticus.